A 342-amino-acid chain; its full sequence is Aldo-keto reductase pigE (342 aa).

The N-terminal stretch at 1-27 is a signal peptide; the sequence is MGSISPKTRFPIVLGAGLIGSPGLFEG. Asp52 contributes to the NADP(+) binding site. Tyr57 functions as the Proton donor in the catalytic mechanism. Residues Gln182 and Arg236 each coordinate NADP(+). Residue Asn271 is glycosylated (N-linked (GlcNAc...) asparagine).

This sequence belongs to the aldo/keto reductase family. Aldo/keto reductase 2 subfamily.

It functions in the pathway secondary metabolite biosynthesis. Aldo-keto reductase; part of the gene cluster that mediates the biosynthesis of azaphilone pigments (MonAzPs), a complex mixture of compounds with a common azaphilone skeleton very widely used as food colorants. Within the pathway, pigE is involved in the dehydration of the C-11 alcohol followed by the reduction of the C6(7) double bond which increases the electrophilicity of the C-5 ketone of the resulting acyl benzopyran and allows the intramolecular Knoevenagel aldol condensation with the C-20 enol of the side chain to yield the characteristic linear tricyclic carbon skeletons of the yellow pigments. The first step of the pathway is performed by the nrPKS pigA that forms the hexaketide precursor from successive condensations of five malonyl-CoA units, with a simple acetyl-CoA starter unit. The role of esterase pigG is not clear, but it may play at most a supplementary role in the formation of the benzaldehyde produced by the pigA nrPKS. This very reactive benzaldehyde is intercepted by the pigC ketoreductase that to provide the first stable enzyme-free MonAzPs intermediate, 6-(4-hydroxy-2-oxopentyl)-3-methyl-2,4-dioxocyclohexane carbaldehyde, also known as M7PKS-1. The FAD-dependent monooxygenase pigN hydroxylates M7PKS-1 at C-4, which triggers the formation of the pyran ring. PigJ, pigK and pigD are involved in the acetylation of the pyran ring. PigJ and pigK form the two subunits of a dedicated fungal FAS that produces the side chain fatty acyl moiety of MonAzPs and pigD transfers the fatty acyl chain to the C-4 alcohol. PigM and pigO are involved in the elimination of the omega-1 alcohol. PigM acts as an O-acetyltransferase that synthesizes the putative O-11 acetyl intermediate whereas pigO eliminates acetic acid to yield an intermediate with a C10(11) double bond. The dehydration of the C-11 alcohol followed by the reduction of the C6(7) double bond by the NAD(P)H-dependent oxidoreductase pigE increases the electrophilicity of the C-5 ketone of the resulting acyl benzopyran. This in turn sets up the C-5 ketone for an intramolecular Knoevenagel aldol condensation with the C-20 enol of the side chain. This condensation affords the characteristic linear tricyclic carbon skeletons of the yellow pigments that serve as the common precursors for the classical yellow pigments monascin and ankaflavin, orange pigments rubopunctatin and monascorubrin, and red pigments ribropunctamine and monascorubramine. The FAD-dependent oxidoreductase pigF is especially invoved in the biosynthesis of orange and red pigments via desaturation of C6(7). The protein is Aldo-keto reductase pigE of Monascus ruber (Mold).